Here is a 234-residue protein sequence, read N- to C-terminus: Adenosine 5'-phosphosulfate reductase (234 aa).

[4Fe-4S] cluster contacts are provided by Cys-120, Cys-121, Cys-203, and Cys-206. Cys-229 functions as the Nucleophile; cysteine thiosulfonate intermediate in the catalytic mechanism.

The protein belongs to the PAPS reductase family. CysH subfamily. [4Fe-4S] cluster is required as a cofactor.

It is found in the cytoplasm. It carries out the reaction [thioredoxin]-disulfide + sulfite + AMP + 2 H(+) = adenosine 5'-phosphosulfate + [thioredoxin]-dithiol. It functions in the pathway sulfur metabolism; hydrogen sulfide biosynthesis; sulfite from sulfate. Its function is as follows. Catalyzes the formation of sulfite from adenosine 5'-phosphosulfate (APS) using thioredoxin as an electron donor. The sequence is that of Adenosine 5'-phosphosulfate reductase from Bacillus cereus (strain 03BB102).